Reading from the N-terminus, the 131-residue chain is MGGGQKGLESAIVCLLVLGLVLEQVQVEGVDCGANPFKVACFNSCLLGPSTVFQCADFCACRLPAGLASVRSSDEPNAIEYCSLGCRSSVCDNMINTADNSTEEMKLYVKRCGVACDSFCKGDTLLASLDD.

Residues 1–29 form the signal peptide; it reads MGGGQKGLESAIVCLLVLGLVLEQVQVEG. A propeptide spans 67-131 (acidic domain); the sequence is LASVRSSDEP…GDTLLASLDD (65 aa).

This sequence belongs to the plant thionin (TC 1.C.44) family. Post-translationally, is disulfide-linked. In terms of tissue distribution, developing endosperm.

It is found in the secreted. Its function is as follows. Thionins are small plant proteins which are toxic to animal cells. They seem to exert their toxic effect at the level of the cell membrane. Their precise function is not known. The sequence is that of Type-5 thionin (TTHV) from Triticum aestivum (Wheat).